The sequence spans 168 residues: uncharacterized protein (168 aa).

The transit peptide at 1–29 (MGWRFPSPSPRQASPVAPLLAAPTAVRSC) directs the protein to the mitochondrion. Residues 98–110 (GETKARRAREEGK) are compositionally biased toward basic and acidic residues. The interval 98-152 (GETKARRAREEGKLPSLGNAPAPRRRSVAWPAAEGSCAAPESSPPASEASLPAPE) is disordered. Low complexity predominate over residues 128-152 (PAAEGSCAAPESSPPASEASLPAPE).

It localises to the mitochondrion. This is an uncharacterized protein from Homo sapiens (Human).